The primary structure comprises 119 residues: Large ribosomal subunit protein uL18 (119 aa).

The protein belongs to the universal ribosomal protein uL18 family. In terms of assembly, part of the 50S ribosomal subunit; part of the 5S rRNA/L5/L18/L25 subcomplex. Contacts the 5S and 23S rRNAs.

This is one of the proteins that bind and probably mediate the attachment of the 5S RNA into the large ribosomal subunit, where it forms part of the central protuberance. The sequence is that of Large ribosomal subunit protein uL18 from Cupriavidus necator (strain ATCC 17699 / DSM 428 / KCTC 22496 / NCIMB 10442 / H16 / Stanier 337) (Ralstonia eutropha).